Consider the following 242-residue polypeptide: Spiralin (242 aa).

The first 23 residues, 1-23 (MKKLLSILAVFGVSAVGTTSVVA), serve as a signal peptide directing secretion. Residue Cys-24 is the site of N-palmitoyl cysteine attachment. Cys-24 carries the S-diacylglycerol cysteine lipid modification.

Belongs to the spiralin family. Seems to occur as dimer, tetramers, and large oligomers of identical chains. In terms of processing, palmitate and stearate are the major lipid components.

The protein localises to the cell membrane. In terms of biological role, major membrane protein of spiroplasma. The chain is Spiralin (spi) from Spiroplasma melliferum.